Reading from the N-terminus, the 177-residue chain is Isopentenyl-diphosphate Delta-isomerase 2 (177 aa).

The Mn(2+) site is built by His24 and His30. Positions 28 to 160 (MLHRAFSIFV…PDVYTVWFKK (133 aa)) constitute a Nudix hydrolase domain. Residue Cys65 is part of the active site. Position 65 (Cys65) interacts with Mg(2+). His67 contacts Mn(2+). Residue Glu85 coordinates Mg(2+). Mn(2+) is bound by residues Glu110 and Glu112. Glu112 is an active-site residue.

Belongs to the IPP isomerase type 1 family. Homodimer. Mg(2+) is required as a cofactor. Requires Mn(2+) as cofactor.

It is found in the cytoplasm. The enzyme catalyses isopentenyl diphosphate = dimethylallyl diphosphate. Its pathway is isoprenoid biosynthesis; dimethylallyl diphosphate biosynthesis; dimethylallyl diphosphate from isopentenyl diphosphate: step 1/1. Its function is as follows. Catalyzes the 1,3-allylic rearrangement of the homoallylic substrate isopentenyl (IPP) to its highly electrophilic allylic isomer, dimethylallyl diphosphate (DMAPP). In Photorhabdus laumondii subsp. laumondii (strain DSM 15139 / CIP 105565 / TT01) (Photorhabdus luminescens subsp. laumondii), this protein is Isopentenyl-diphosphate Delta-isomerase 2.